The primary structure comprises 306 residues: UDP-3-O-acyl-N-acetylglucosamine deacetylase (306 aa).

Positions 79, 238, and 242 each coordinate Zn(2+). His265 serves as the catalytic Proton donor.

The protein belongs to the LpxC family. It depends on Zn(2+) as a cofactor.

It catalyses the reaction a UDP-3-O-[(3R)-3-hydroxyacyl]-N-acetyl-alpha-D-glucosamine + H2O = a UDP-3-O-[(3R)-3-hydroxyacyl]-alpha-D-glucosamine + acetate. It functions in the pathway glycolipid biosynthesis; lipid IV(A) biosynthesis; lipid IV(A) from (3R)-3-hydroxytetradecanoyl-[acyl-carrier-protein] and UDP-N-acetyl-alpha-D-glucosamine: step 2/6. Its function is as follows. Catalyzes the hydrolysis of UDP-3-O-myristoyl-N-acetylglucosamine to form UDP-3-O-myristoylglucosamine and acetate, the committed step in lipid A biosynthesis. This chain is UDP-3-O-acyl-N-acetylglucosamine deacetylase, found in Shewanella sp. (strain ANA-3).